A 355-amino-acid polypeptide reads, in one-letter code: Peptide chain release factor 1 (355 aa).

An N5-methylglutamine modification is found at glutamine 229. The tract at residues 280-299 (LDRERSAARKGQVGSGDRSE) is disordered.

This sequence belongs to the prokaryotic/mitochondrial release factor family. Post-translationally, methylated by PrmC. Methylation increases the termination efficiency of RF1.

The protein localises to the cytoplasm. In terms of biological role, peptide chain release factor 1 directs the termination of translation in response to the peptide chain termination codons UAG and UAA. The chain is Peptide chain release factor 1 from Parvibaculum lavamentivorans (strain DS-1 / DSM 13023 / NCIMB 13966).